Here is a 364-residue protein sequence, read N- to C-terminus: Geissoschizine synthase (364 aa).

C51 is a binding site for Zn(2+). Residue N52 participates in NADP(+) binding. 7 residues coordinate Zn(2+): H73, E74, C104, C107, C110, C118, and C168. 13 residues coordinate NADP(+): L194, G196, L197, S216, T217, S218, K221, R261, V280, A282, S304, T306, and R351.

It belongs to the zinc-containing alcohol dehydrogenase family. Class-III subfamily. In terms of assembly, homodimer. Requires Zn(2+) as cofactor. In terms of tissue distribution, expressed in leaf epidermis.

It catalyses the reaction (19E)-geissoschizine + NADP(+) = 4,21-dehydrogeissoschizine + NADPH. It participates in alkaloid biosynthesis. Its function is as follows. Component of the seco-iridoid and derivatives monoterpenoid indole alkaloids (MIAs, e.g. catharanthine, tabersonine, vincadifformine, vindoline, vincristine, quinine and strychnine) biosynthesis pathway. During the conversion of strictosidine aglycone to geissoschizine, catalyzes iminium reduction on 4,21-dehydrogeissoschizine to produce 19E-geissoschizine, precursor of catharanthine and tabersonine derivatives. May also trigger the production of reactive intermediate used by the HL1, HL2, HL3 and HL4 to form catharanthine, vincadifformine and tabersonine. In Catharanthus roseus (Madagascar periwinkle), this protein is Geissoschizine synthase.